The primary structure comprises 426 residues: D-tagatose-1,6-bisphosphate aldolase subunit KbaZ (426 aa).

Belongs to the GatZ/KbaZ family. KbaZ subfamily. In terms of assembly, forms a complex with KbaY.

It participates in carbohydrate metabolism; D-tagatose 6-phosphate degradation; D-glyceraldehyde 3-phosphate and glycerone phosphate from D-tagatose 6-phosphate: step 2/2. Component of the tagatose-1,6-bisphosphate aldolase KbaYZ that is required for full activity and stability of the Y subunit. Could have a chaperone-like function for the proper and stable folding of KbaY. When expressed alone, KbaZ does not show any aldolase activity. The protein is D-tagatose-1,6-bisphosphate aldolase subunit KbaZ of Escherichia coli O6:K15:H31 (strain 536 / UPEC).